The following is a 196-amino-acid chain: ATP-dependent Clp protease proteolytic subunit (196 aa).

The Nucleophile role is filled by S101. Residue H126 is part of the active site.

It belongs to the peptidase S14 family. As to quaternary structure, component of the chloroplastic Clp protease core complex.

It localises to the plastid. The protein resides in the chloroplast stroma. The catalysed reaction is Hydrolysis of proteins to small peptides in the presence of ATP and magnesium. alpha-casein is the usual test substrate. In the absence of ATP, only oligopeptides shorter than five residues are hydrolyzed (such as succinyl-Leu-Tyr-|-NHMec, and Leu-Tyr-Leu-|-Tyr-Trp, in which cleavage of the -Tyr-|-Leu- and -Tyr-|-Trp bonds also occurs).. Cleaves peptides in various proteins in a process that requires ATP hydrolysis. Has a chymotrypsin-like activity. Plays a major role in the degradation of misfolded proteins. The polypeptide is ATP-dependent Clp protease proteolytic subunit (Panax ginseng (Korean ginseng)).